Consider the following 2187-residue polypeptide: Non-reducing polyketide synthase phnA (2187 aa).

An N-terminal acylcarrier protein transacylase domain (SAT) region spans residues 17–255; sequence LLFGDLSLAH…KYLDIDSPYH (239 aa). A Ketosynthase family 3 (KS3) domain is found at 383–819; sequence HSKIAIVGYS…GGNTAMLIED (437 aa). Residues C555, H690, and H735 each act as for beta-ketoacyl synthase activity in the active site. The interval 926 to 1226 is malonyl-CoA:ACP transacylase (MAT) domain; it reads RVAFAFTGQG…GMVKGTIDSR (301 aa). S1021 acts as the For acyl/malonyl transferase activity in catalysis. The interval 1321-1637 is product template (PT) domain; sequence PCAQQIVEEF…PRRALDHLLP (317 aa). Positions 1324–1458 are N-terminal hotdog fold; that stretch reads QQIVEEFHDS…LDVVLYPGQQ (135 aa). The PKS/mFAS DH domain occupies 1324-1633; the sequence is QQIVEEFHDS…FQGVPRRALD (310 aa). Residue H1356 is the Proton acceptor; for dehydratase activity of the active site. The interval 1486-1633 is C-terminal hotdog fold; that stretch reads TETHLIKRGM…FQGVPRRALD (148 aa). D1546 functions as the Proton donor; for dehydratase activity in the catalytic mechanism. A compositionally biased stretch (low complexity) spans 1652 to 1669; that stretch reads KAPVAAVAPPRTPTKAAP. Residues 1652–1681 form a disordered region; the sequence is KAPVAAVAPPRTPTKAAPQSRQAAPKQKRS. 2 Carrier domains span residues 1684–1758 and 1796–1874; these read SDVF…SNSD and SSES…YNVM. S1718 carries the O-(pantetheine 4'-phosphoryl)serine modification. The tract at residues 1754–1796 is disordered; it reads LSNSDEDDTPSGDSSTYEDSESQITSPASSVGPETPGGGEFGS. The segment covering 1757–1774 has biased composition (acidic residues); that stretch reads SDEDDTPSGDSSTYEDSE. S1834 is modified (O-(pantetheine 4'-phosphoryl)serine). Residues 1906-2183 form a thioesterase (TE) domain region; sequence SSLPQATSIL…PEMGEAVAEF (278 aa). S2009 serves as the catalytic For thioesterase activity.

It catalyses the reaction 6 malonyl-CoA + acetyl-CoA + 5 H(+) = 3,6,7,9-tetrahydroxy-3-methyl-2,3-dihydro-1H-naphtho[2,1-b]pyran-1-one + 6 CO2 + 7 CoA + H2O. It participates in secondary metabolite biosynthesis. Non-reducing polyketide synthase; part of the gene cluster that mediates the biosynthesis of phenalenones such as herqueinone, compounds that have been reported to treat tumors, bacterial infections and/or mycoses, and rheumatic diseases. The non-reducing polyketide synthase phnA synthesizes the heptaketide backbone and cyclizes it into the angular, hemiketal-containing naphtho-gamma-pyrone prephenalenone. The product template (PT) domain of phnA catalyzes only the C4-C9 aldol condensation, which is unprecedented among known PT domains. The transformation of prephenalenone to phenalenones requires an FAD-dependent monooxygenase phnB, which catalyzes the C2 aromatic hydroxylation of prephenalenone and ring opening of the gamma-pyrone ring simultaneously. Subsequent intramolecular deprotonation of C3 phenolic oxygen accelerates phenalenone ring closure to yield the tricyclic phenalenone core with a C2 hydroxylation. The prenyltransferase phnF further catalyzes reverse C-prenylation of phenalenone by direct electrophilic substitution at C6, or possibly via first a forward O-prenylation of a neighboring phenol in phenalenone, followed by a Claisen rearrangement. The hydroalkoxylation enzyme phnH catalyzes the 5-exo-trig cyclization via acid catalysis after the spontaneous deprotonation of 7-OH, which leads to the formation of the dihydrobenzofuran atrovenetin. Atrovenetin is further converted to deoxyherqueinone by the O-methyltransferase phnC which can methylate C2-OH to stabilize the northern portion of the phenalenone core. Finally, the oxidoreductase phnG converts deoxyherqueinone to herqueinone via C6 hydroxylation. This is Non-reducing polyketide synthase phnA from Penicillium herquei.